Reading from the N-terminus, the 432-residue chain is Patatin-like phospholipase domain-containing protein 5 (432 aa).

The PNPLA domain maps to Leu-12 to Pro-181. The GXGXXG signature appears at Gly-16–Gly-21. The GXSXG motif lies at Gly-47–Gly-51. The Nucleophile role is filled by Ser-49. The active-site Proton acceptor is the Asp-168. The DGA/G signature appears at Asp-168–Ala-170. A disordered region spans residues Ala-404 to Leu-423.

It catalyses the reaction a triacylglycerol + H2O = a diacylglycerol + a fatty acid + H(+). Its function is as follows. Has abundant triacylglycerol lipase activity. The sequence is that of Patatin-like phospholipase domain-containing protein 5 from Mus musculus (Mouse).